The sequence spans 346 residues: Holliday junction branch migration complex subunit RuvB (346 aa).

Residues 4-184 are large ATPase domain (RuvB-L); that stretch reads TDRLIAPTAK…FGIVQRLEFY (181 aa). Residues R24, G65, K68, T69, T70, 131 to 133, R174, Y184, and R221 each bind ATP; that span reads EDF. Residue T69 coordinates Mg(2+). Residues 185–255 are small ATPAse domain (RuvB-S); the sequence is NVKDLTHIVA…LADKALNMLN (71 aa). Residues 258–346 are head domain (RuvB-H); that stretch reads ERGFDHMDRR…QESQGGEGIA (89 aa). Positions 294, 313, and 318 each coordinate DNA.

This sequence belongs to the RuvB family. Homohexamer. Forms an RuvA(8)-RuvB(12)-Holliday junction (HJ) complex. HJ DNA is sandwiched between 2 RuvA tetramers; dsDNA enters through RuvA and exits via RuvB. An RuvB hexamer assembles on each DNA strand where it exits the tetramer. Each RuvB hexamer is contacted by two RuvA subunits (via domain III) on 2 adjacent RuvB subunits; this complex drives branch migration. In the full resolvosome a probable DNA-RuvA(4)-RuvB(12)-RuvC(2) complex forms which resolves the HJ.

It is found in the cytoplasm. It carries out the reaction ATP + H2O = ADP + phosphate + H(+). The RuvA-RuvB-RuvC complex processes Holliday junction (HJ) DNA during genetic recombination and DNA repair, while the RuvA-RuvB complex plays an important role in the rescue of blocked DNA replication forks via replication fork reversal (RFR). RuvA specifically binds to HJ cruciform DNA, conferring on it an open structure. The RuvB hexamer acts as an ATP-dependent pump, pulling dsDNA into and through the RuvAB complex. RuvB forms 2 homohexamers on either side of HJ DNA bound by 1 or 2 RuvA tetramers; 4 subunits per hexamer contact DNA at a time. Coordinated motions by a converter formed by DNA-disengaged RuvB subunits stimulates ATP hydrolysis and nucleotide exchange. Immobilization of the converter enables RuvB to convert the ATP-contained energy into a lever motion, pulling 2 nucleotides of DNA out of the RuvA tetramer per ATP hydrolyzed, thus driving DNA branch migration. The RuvB motors rotate together with the DNA substrate, which together with the progressing nucleotide cycle form the mechanistic basis for DNA recombination by continuous HJ branch migration. Branch migration allows RuvC to scan DNA until it finds its consensus sequence, where it cleaves and resolves cruciform DNA. This is Holliday junction branch migration complex subunit RuvB from Cellvibrio japonicus (strain Ueda107) (Pseudomonas fluorescens subsp. cellulosa).